A 200-amino-acid chain; its full sequence is Protein-methionine-sulfoxide reductase heme-binding subunit MsrQ (200 aa).

5 consecutive transmembrane segments (helical) span residues 8-28, 54-74, 79-99, 116-136, and 153-173; these read ITWLKVALHLAAFLPLVWLFY, LLLATLLVTPLTRLLKQPLLI, LLGLWCFAWATLHLVSYSLLE, PYLTLGIVSWLILLALALTSF, and FIYLVAILAPIHYLWSVKILS.

It belongs to the MsrQ family. In terms of assembly, heterodimer of a catalytic subunit (MsrP) and a heme-binding subunit (MsrQ). FMN serves as cofactor. Requires heme b as cofactor.

The protein resides in the cell inner membrane. Functionally, part of the MsrPQ system that repairs oxidized periplasmic proteins containing methionine sulfoxide residues (Met-O), using respiratory chain electrons. Thus protects these proteins from oxidative-stress damage caused by reactive species of oxygen and chlorine generated by the host defense mechanisms. MsrPQ is essential for the maintenance of envelope integrity under bleach stress, rescuing a wide series of structurally unrelated periplasmic proteins from methionine oxidation. MsrQ provides electrons for reduction to the reductase catalytic subunit MsrP, using the quinone pool of the respiratory chain. The polypeptide is Protein-methionine-sulfoxide reductase heme-binding subunit MsrQ (Cronobacter sakazakii (strain ATCC BAA-894) (Enterobacter sakazakii)).